Here is a 180-residue protein sequence, read N- to C-terminus: MSALTIYSETETREPLWHSTDAAEIADKLNARGVRFERWEADRDLGQDPAAETVINAYQHAIDKLVAEKGYQSWDVISLRADNPQKEALRAKFLNEHTHGEDEVRFFVEGAGLFCLHIDDQVYQVLCEKNDLISVPAGTPHWFDMGSEPNFTAIRIFDNPEGWIAQFTGDAIADAYPRLP.

His-97, His-99, Glu-103, and His-141 together coordinate Fe(2+). Ni(2+) contacts are provided by His-97, His-99, Glu-103, and His-141.

Belongs to the acireductone dioxygenase (ARD) family. Monomer. Fe(2+) serves as cofactor. Requires Ni(2+) as cofactor.

The catalysed reaction is 1,2-dihydroxy-5-(methylsulfanyl)pent-1-en-3-one + O2 = 3-(methylsulfanyl)propanoate + CO + formate + 2 H(+). The enzyme catalyses 1,2-dihydroxy-5-(methylsulfanyl)pent-1-en-3-one + O2 = 4-methylsulfanyl-2-oxobutanoate + formate + 2 H(+). It participates in amino-acid biosynthesis; L-methionine biosynthesis via salvage pathway; L-methionine from S-methyl-5-thio-alpha-D-ribose 1-phosphate: step 5/6. Functionally, catalyzes 2 different reactions between oxygen and the acireductone 1,2-dihydroxy-3-keto-5-methylthiopentene (DHK-MTPene) depending upon the metal bound in the active site. Fe-containing acireductone dioxygenase (Fe-ARD) produces formate and 2-keto-4-methylthiobutyrate (KMTB), the alpha-ketoacid precursor of methionine in the methionine recycle pathway. Ni-containing acireductone dioxygenase (Ni-ARD) produces methylthiopropionate, carbon monoxide and formate, and does not lie on the methionine recycle pathway. The chain is Acireductone dioxygenase from Enterobacter sp. (strain 638).